A 1276-amino-acid chain; its full sequence is Probable histone acetyltransferase HAC-like 3 (1276 aa).

The interval Val391 to Lys421 is disordered. Residues Gln396–Ser413 show a composition bias toward polar residues. A PHD-type zinc finger spans residues Ser621–Lys689. The 427-residue stretch at Ile704–Cys1130 folds into the CBP/p300-type HAT domain. Acetyl-CoA is bound by residues Ile827–Ser829, Arg846–Thr847, and Trp902. Residues Glu953–Leu973 are a coiled coil. 2 consecutive ZZ-type zinc fingers follow at residues Cys1013–Leu1076 and Leu1125–Tyr1187. 16 residues coordinate Zn(2+): Cys1018, Cys1021, Cys1033, Cys1036, Cys1042, Cys1045, His1058, His1066, Cys1130, Cys1133, Cys1145, Cys1148, Cys1154, Cys1157, His1168, and His1177. A TAZ-type zinc finger spans residues His1177–Ile1260.

The protein localises to the nucleus. It catalyses the reaction L-lysyl-[protein] + acetyl-CoA = N(6)-acetyl-L-lysyl-[protein] + CoA + H(+). Acetyltransferase enzyme. Acetylates histones, giving a specific tag for transcriptional activation. The protein is Probable histone acetyltransferase HAC-like 3 of Oryza sativa subsp. japonica (Rice).